A 141-amino-acid chain; its full sequence is SsrA-binding protein (141 aa).

Belongs to the SmpB family.

The protein resides in the cytoplasm. In terms of biological role, required for rescue of stalled ribosomes mediated by trans-translation. Binds to transfer-messenger RNA (tmRNA), required for stable association of tmRNA with ribosomes. tmRNA and SmpB together mimic tRNA shape, replacing the anticodon stem-loop with SmpB. tmRNA is encoded by the ssrA gene; the 2 termini fold to resemble tRNA(Ala) and it encodes a 'tag peptide', a short internal open reading frame. During trans-translation Ala-aminoacylated tmRNA acts like a tRNA, entering the A-site of stalled ribosomes, displacing the stalled mRNA. The ribosome then switches to translate the ORF on the tmRNA; the nascent peptide is terminated with the 'tag peptide' encoded by the tmRNA and targeted for degradation. The ribosome is freed to recommence translation, which seems to be the essential function of trans-translation. The polypeptide is SsrA-binding protein (Ureaplasma parvum serovar 3 (strain ATCC 27815 / 27 / NCTC 11736)).